A 317-amino-acid chain; its full sequence is Aspartate carbamoyltransferase catalytic subunit (317 aa).

Positions 66 and 67 each coordinate carbamoyl phosphate. L-aspartate is bound at residue lysine 94. Residues arginine 116, histidine 144, and glutamine 147 each contribute to the carbamoyl phosphate site. L-aspartate contacts are provided by arginine 177 and arginine 231. The carbamoyl phosphate site is built by glycine 272 and proline 273.

This sequence belongs to the aspartate/ornithine carbamoyltransferase superfamily. ATCase family. As to quaternary structure, heterododecamer (2C3:3R2) of six catalytic PyrB chains organized as two trimers (C3), and six regulatory PyrI chains organized as three dimers (R2).

It carries out the reaction carbamoyl phosphate + L-aspartate = N-carbamoyl-L-aspartate + phosphate + H(+). The protein operates within pyrimidine metabolism; UMP biosynthesis via de novo pathway; (S)-dihydroorotate from bicarbonate: step 2/3. Catalyzes the condensation of carbamoyl phosphate and aspartate to form carbamoyl aspartate and inorganic phosphate, the committed step in the de novo pyrimidine nucleotide biosynthesis pathway. This is Aspartate carbamoyltransferase catalytic subunit from Beijerinckia indica subsp. indica (strain ATCC 9039 / DSM 1715 / NCIMB 8712).